Consider the following 92-residue polypeptide: Non-specific lipid-transfer protein 2 (92 aa).

Disulfide bonds link C4–C52, C14–C28, C29–C74, and C50–C88.

This sequence belongs to the plant LTP family. Expressed in seeds and, at very low levels, in pulp of fruit (at protein level).

Its function is as follows. Plant non-specific lipid-transfer proteins transfer phospholipids as well as galactolipids across membranes. May play a role in wax or cutin deposition in the cell walls of expanding epidermal cells and certain secretory tissues. The sequence is that of Non-specific lipid-transfer protein 2 from Actinidia deliciosa (Kiwi).